The chain runs to 458 residues: MRPLSPPPAGWFCVLAGVLACVLGPVGSWAVGLQQEECDYLQMIKVQHKQCLEEAQLENETSGCSKMWDNLTCWPATPRGQVVVLACPLIFKLFSPTQGLNVSRNCTDEGWTPLEPGPYPIACGMDDKASGLDEQQTVFYNSVKTGYTIGYSLSLAALLVATAILSLFRKLHCTRNYIHMHLFISFILRATAVFIKDLALFDSEESDHCSKGSVGCKAAVVLFQYCVMANFFWLLVEGLYLHTLLAVSFFSERKYFWGYIFVGWGVPSTFIMVWTVVRIHFEDYGCWDTIHSSLWWIIKAPILASILVNFILFIRIIGILVQKLRPPDVGKSDNSPYSRLAKSTLLLIPLFGVHYIMFAFFPDNFKAEVKMVFELIVGSFQGCVVAILYCFLNGEVQAELRRKWRRWHQQGVLGWDSKYQHPSGGSNGDTCSTQVSMLTRVSPSARRSSSFQAEVSLV.

The N-terminal stretch at 1 to 31 (MRPLSPPPAGWFCVLAGVLACVLGPVGSWAV) is a signal peptide. Residues 32 to 142 (GLQQEECDYL…DEQQTVFYNS (111 aa)) are Extracellular-facing. Disulfide bonds link C38/C209, C51/C73, C64/C106, C87/C123, and C216/C286. Residues N59, N70, N101, and N105 are each glycosylated (N-linked (GlcNAc...) asparagine). A helical transmembrane segment spans residues 143 to 167 (VKTGYTIGYSLSLAALLVATAILSL). The Cytoplasmic segment spans residues 168-175 (FRKLHCTR). A helical transmembrane segment spans residues 176 to 197 (NYIHMHLFISFILRATAVFIKD). Over 198–217 (LALFDSEESDHCSKGSVGCK) the chain is Extracellular. The helical transmembrane segment at 218–242 (AAVVLFQYCVMANFFWLLVEGLYLH) threads the bilayer. Residues 243–255 (TLLAVSFFSERKY) are Cytoplasmic-facing. A helical membrane pass occupies residues 256 to 277 (FWGYIFVGWGVPSTFIMVWTVV). The Extracellular portion of the chain corresponds to 278-292 (RIHFEDYGCWDTIHS). Residues 293–317 (SLWWIIKAPILASILVNFILFIRII) form a helical membrane-spanning segment. The Cytoplasmic portion of the chain corresponds to 318–339 (GILVQKLRPPDVGKSDNSPYSR). A helical membrane pass occupies residues 340–360 (LAKSTLLLIPLFGVHYIMFAF). Residues 361 to 368 (FPDNFKAE) lie on the Extracellular side of the membrane. The chain crosses the membrane as a helical span at residues 369 to 392 (VKMVFELIVGSFQGCVVAILYCFL). At 393–458 (NGEVQAELRR…SSFQAEVSLV (66 aa)) the chain is on the cytoplasmic side.

The protein belongs to the G-protein coupled receptor 2 family. As to quaternary structure, interacts with ADCYAP1/PACAP; activated by both PACAP27 and PACAP38 neuropeptides. Interacts with VIP; the interaction results in VIPR1 activation.

It localises to the cell membrane. G protein-coupled receptor activated by the neuropeptides vasoactive intestinal peptide (VIP) and pituitary adenylate cyclase-activating polypeptide (ADCYAP1/PACAP). Binds VIP and both PACAP27 and PACAP38 bioactive peptides with the following order of ligand affinity VIP = PACAP27 &gt; PACAP38. Ligand binding causes a conformation change that triggers signaling via guanine nucleotide-binding proteins (G proteins) and modulates the activity of downstream effectors. Activates cAMP-dependent pathway. This Sus scrofa (Pig) protein is Vasoactive intestinal polypeptide receptor 1 (VIPR1).